A 755-amino-acid chain; its full sequence is Bacteriophytochrome (755 aa).

Cys-24 provides a ligand contact to a tetrapyrrole. In terms of domain architecture, PAS spans 26-94; the sequence is REPIHIPGSI…LQAALPPGCP (69 aa). The chromophore binding domain stretch occupies residues 95–504; that stretch reads DALQYRATLD…RDTLTGALGE (410 aa). Residues 152 to 316 enclose the GAF domain; it reads NLRALAEVAT…YLGRLLSLQV (165 aa). The Histidine kinase domain maps to 529 to 747; sequence VISHHMQEPV…TFRCWLPDAG (219 aa). Position 532 is a phosphohistidine; by autocatalysis (His-532).

The protein in the N-terminal section; belongs to the phytochrome family. Post-translationally, contains one covalently linked tetrapyrrole chromophore. Lacks the cysteine conserved in plant phytochromes (at the position of Met-259) that binds chromophore. An engineered sequence used for X-ray crystallography forms a thioether link to biliverdin through Cys-24. The natural sequence can bind phycocyanobilin and phytochromobilin in vitro, but the identity of the natural chromophore is unknown.

The catalysed reaction is ATP + protein L-histidine = ADP + protein N-phospho-L-histidine.. Photoreceptor which exists in two forms that are reversibly interconvertible by light: the R form that absorbs maximally in the red region of the spectrum and the FR form that absorbs maximally in the far-red region. Also has a slight blue shift for the far-red maximum. Could also absorb green light. May participate in regulating pigment synthesis like the carotenoid deinoxanthin which could protect the bacterium from intense visible light. In Deinococcus radiodurans (strain ATCC 13939 / DSM 20539 / JCM 16871 / CCUG 27074 / LMG 4051 / NBRC 15346 / NCIMB 9279 / VKM B-1422 / R1), this protein is Bacteriophytochrome (bphP).